The following is a 209-amino-acid chain: Ribosomal RNA small subunit methyltransferase G (209 aa).

S-adenosyl-L-methionine-binding positions include glycine 71, phenylalanine 76, 122-123 (AE), and arginine 135.

This sequence belongs to the methyltransferase superfamily. RNA methyltransferase RsmG family.

The protein localises to the cytoplasm. Its function is as follows. Specifically methylates the N7 position of a guanine in 16S rRNA. The polypeptide is Ribosomal RNA small subunit methyltransferase G (Phocaeicola vulgatus (strain ATCC 8482 / DSM 1447 / JCM 5826 / CCUG 4940 / NBRC 14291 / NCTC 11154) (Bacteroides vulgatus)).